The primary structure comprises 932 residues: Protein translocase subunit SecA (932 aa).

ATP is bound by residues Q87, 105–109 (GEGKT), and D515. Zn(2+)-binding residues include C916, C918, C927, and H928.

Belongs to the SecA family. As to quaternary structure, monomer and homodimer. Part of the essential Sec protein translocation apparatus which comprises SecA, SecYEG and auxiliary proteins SecDF-YajC and YidC. Zn(2+) serves as cofactor.

The protein resides in the cell inner membrane. The protein localises to the cytoplasm. It carries out the reaction ATP + H2O + cellular proteinSide 1 = ADP + phosphate + cellular proteinSide 2.. Functionally, part of the Sec protein translocase complex. Interacts with the SecYEG preprotein conducting channel. Has a central role in coupling the hydrolysis of ATP to the transfer of proteins into and across the cell membrane, serving both as a receptor for the preprotein-SecB complex and as an ATP-driven molecular motor driving the stepwise translocation of polypeptide chains across the membrane. The protein is Protein translocase subunit SecA of Burkholderia lata (strain ATCC 17760 / DSM 23089 / LMG 22485 / NCIMB 9086 / R18194 / 383).